We begin with the raw amino-acid sequence, 1553 residues long: ABC-type transporter cctS (1553 aa).

Transmembrane regions (helical) follow at residues 27-47 (LIPLTACLASAIACLISYFHA), 90-110 (LEVALILAEISIAIFLLIFSG), 114-134 (DLTSVFASAVSSIYLLLILFV), and 151-171 (SVLYTLQWTCLTAIVHAAILG). An N-linked (GlcNAc...) asparagine glycan is attached at Asn-176. 5 helical membrane passes run 177-197 (FTIATLVRFALFTFLCLFHWT), 286-306 (LLWQGAWATLNSFAVFVPPVL), 324-344 (TAWLYVTGLLVAGIVAGVAGC), 413-433 (GYLYLVWITFPVQTAIGTYLL), and 438-458 (GISGIVGVALMLGLLPLNILI). The 290-residue stretch at 293–582 (ATLNSFAVFV…IADAITFLLR (290 aa)) folds into the ABC transmembrane type-1 1 domain. N-linked (GlcNAc...) asparagine glycosylation occurs at Asn-524. 2 helical membrane passes run 527-547 (TFFSLPLIVTILTLFFYTVVW) and 550-570 (SMGTAVAFPALVIFSILRIPF). Residue Asn-617 is glycosylated (N-linked (GlcNAc...) asparagine). The ABC transporter 1 domain maps to 635-874 (NKRSDIQLTE…GRIDADIMQN (240 aa)). ATP is bound at residue 670–677 (GPSGSGKS). An N-linked (GlcNAc...) asparagine glycan is attached at Asn-725. The helical transmembrane segment at 948–970 (WYWVLVLFMFGIQQFISLATNIW) threads the bilayer. Positions 951–1255 (VLVLFMFGIQ…FVQLYAIVQQ (305 aa)) constitute an ABC transmembrane type-1 2 domain. N-linked (GlcNAc...) asparagine glycosylation is present at Asn-992. A helical membrane pass occupies residues 1017 to 1037 (IYVAICLAYAFFTFARDLIVF). Residue Asn-1085 is glycosylated (N-linked (GlcNAc...) asparagine). The next 4 helical transmembrane spans lie at 1086-1108 (ISTFSINTLQIAASLVMIIVFIS), 1113-1135 (AFLIAAVFICVAYWFVMTIFING), 1204-1224 (FLGSLILFFTGAFVVWDLESV), and 1229-1249 (AALVLTYAAMFSESIMWFVQL). The ABC transporter 2 domain maps to 1294-1533 (VRFDAYTTRY…DDDGIFRRLC (240 aa)). 1328-1335 (GRTGAGKS) contributes to the ATP binding site.

Belongs to the ABC transporter superfamily.

Its subcellular location is the membrane. The protein operates within mycotoxin biosynthesis. In terms of biological role, ABC-type transporter; part of the gene cluster that mediates the biosynthesis of the mycotoxin cyclochlorotine, a hepatotoxic and carcinogenic cyclic chlorinated pentapeptide. CctS is essential for the biosynthesis of cyclochlorotine, maybe as a chloride channel that supplies chloride for chlorination by cctP2. The chain is ABC-type transporter cctS from Talaromyces islandicus (Penicillium islandicum).